Reading from the N-terminus, the 179-residue chain is Adenine phosphoribosyltransferase (179 aa).

Belongs to the purine/pyrimidine phosphoribosyltransferase family. As to quaternary structure, homodimer.

The protein localises to the cytoplasm. The enzyme catalyses AMP + diphosphate = 5-phospho-alpha-D-ribose 1-diphosphate + adenine. It functions in the pathway purine metabolism; AMP biosynthesis via salvage pathway; AMP from adenine: step 1/1. Catalyzes a salvage reaction resulting in the formation of AMP, that is energically less costly than de novo synthesis. The polypeptide is Adenine phosphoribosyltransferase (Nitrobacter winogradskyi (strain ATCC 25391 / DSM 10237 / CIP 104748 / NCIMB 11846 / Nb-255)).